The sequence spans 344 residues: Plastoglobule-localized metallopeptidase 48, chloroplastic (344 aa).

The N-terminal 47 residues, 1-47 (MAVSVSAPVLSLCYNQSGELSRSLGYRLPKKVGFSSGRRSVSYIGFG), are a transit peptide targeting the chloroplast. Helical transmembrane passes span 102 to 122 (LLGSMTEQIMLLENIGTSVLV) and 169 to 189 (FIVVHTSLIELLTSAELQAVL). H191 provides a ligand contact to Zn(2+). E192 is a catalytic residue. Position 195 (H195) interacts with Zn(2+). A helical transmembrane segment spans residues 201-221 (GVWLTFANILTLGAYTVPAFG). E240 contacts Zn(2+). Residues 256-272 (VVVSVLMKLAGGCPSIA) traverse the membrane as a helical segment.

It belongs to the peptidase M48 family. M48D subfamily. In terms of assembly, interacts with plastoglobule (PG) core proteins ABC1K3, PES1 and CCD4. Requires Zn(2+) as cofactor. In terms of tissue distribution, mostly expressed in flowers (e.g. sepals, petals and stamen), seeds, leaves and cotyledons.

It is found in the plastid. Its subcellular location is the chloroplast. It localises to the plastoglobule. The protein resides in the chloroplast membrane. Functionally, metalloendopeptidase with a Zn-dependent proteolytic activity and substrate cleavage upstream of hydrophobic residues. Positive regulator of senescence, probably by degrading CCD4, thus participating in the controlled removal of carotenoids from the thylakoid membrane during the senescence process. This chain is Plastoglobule-localized metallopeptidase 48, chloroplastic, found in Arabidopsis thaliana (Mouse-ear cress).